The chain runs to 313 residues: Syndecan-1 (313 aa).

The N-terminal stretch at 1 to 22 is a signal peptide; that stretch reads MRRAALWLWLCALALRLQPALP. The Extracellular segment spans residues 23–257; the sequence is QIVTANVPPE…GLLDRKEVLG (235 aa). 2 disordered regions span residues 27-58 and 95-186; these read ANVPPEDQDGSGDDSDNFSGSGTGALPDMTLS and AGEK…VEDG. Residues 32-42 show a composition bias toward acidic residues; the sequence is EDQDGSGDDSD. Residue Ser37 is glycosylated (O-linked (Xyl...) (chondroitin sulfate) serine). Residue Asn43 is glycosylated (N-linked (GlcNAc...) asparagine). Ser45 and Ser47 each carry an O-linked (Xyl...) (heparan sulfate) serine glycan. Positions 97-129 are enriched in basic and acidic residues; it reads EKPEEGEPVAHVEAEPDFTARDKEKEATTRPRE. Over residues 135–154 the composition is skewed to low complexity; that stretch reads VTQQASTAARATTAQASVTS. O-linked (Xyl...) (chondroitin sulfate) serine glycans are attached at residues Ser209 and Ser219. The chain crosses the membrane as a helical span at residues 258–278; the sequence is GVIAGGLVGLIFAVCLVAFML. At 279–313 the chain is on the cytoplasmic side; sequence YRMKKKDEGSYSLEEPKQANGGAYQKPTKQEEFYA. Residues 286–295 are compositionally biased toward basic and acidic residues; sequence EGSYSLEEPK. The interval 286-313 is disordered; sequence EGSYSLEEPKQANGGAYQKPTKQEEFYA. Ser288 carries the phosphoserine modification.

It belongs to the syndecan proteoglycan family. Interacts with CDCP1. Interacts (via C-terminus) with TIAM1 (via PDZ domain). Interacts with MDK. Shedding is enhanced by a number of factors such as heparanase, thrombin or EGF. Also by stress and wound healing. PMA-mediated shedding is inhibited by TIMP3.

It localises to the membrane. The protein localises to the secreted. Its subcellular location is the extracellular exosome. Functionally, cell surface proteoglycan that contains both heparan sulfate and chondroitin sulfate and that links the cytoskeleton to the interstitial matrix. Regulates exosome biogenesis in concert with SDCBP and PDCD6IP. Able to induce its own expression in dental mesenchymal cells and also in the neighboring dental epithelial cells via an MSX1-mediated pathway. This chain is Syndecan-1, found in Rattus norvegicus (Rat).